The primary structure comprises 290 residues: Pantothenate synthetase (290 aa).

34 to 41 (MGNLHDGH) is an ATP binding site. The active-site Proton donor is histidine 41. Glutamine 65 provides a ligand contact to (R)-pantoate. Position 65 (glutamine 65) interacts with beta-alanine. Residue 156–159 (GKKD) participates in ATP binding. Residue glutamine 162 participates in (R)-pantoate binding. ATP contacts are provided by residues alanine 185 and 193–196 (LSSR).

This sequence belongs to the pantothenate synthetase family. In terms of assembly, homodimer.

Its subcellular location is the cytoplasm. The enzyme catalyses (R)-pantoate + beta-alanine + ATP = (R)-pantothenate + AMP + diphosphate + H(+). It participates in cofactor biosynthesis; (R)-pantothenate biosynthesis; (R)-pantothenate from (R)-pantoate and beta-alanine: step 1/1. Functionally, catalyzes the condensation of pantoate with beta-alanine in an ATP-dependent reaction via a pantoyl-adenylate intermediate. The sequence is that of Pantothenate synthetase from Acidovorax ebreus (strain TPSY) (Diaphorobacter sp. (strain TPSY)).